We begin with the raw amino-acid sequence, 235 residues long: Protein C1orf43 homolog (235 aa).

A helical membrane pass occupies residues V11–V31.

It is found in the membrane. It localises to the golgi apparatus. The protein resides in the mitochondrion. General regulator of phagocytosis. Required to uptake Gram negative bacterium by macrophages. This chain is Protein C1orf43 homolog, found in Rattus norvegicus (Rat).